We begin with the raw amino-acid sequence, 236 residues long: Ribonuclease P protein component 3 (236 aa).

This sequence belongs to the eukaryotic/archaeal RNase P protein component 3 family. As to quaternary structure, consists of a catalytic RNA component and at least 4-5 protein subunits.

The protein resides in the cytoplasm. It catalyses the reaction Endonucleolytic cleavage of RNA, removing 5'-extranucleotides from tRNA precursor.. Functionally, part of ribonuclease P, a protein complex that generates mature tRNA molecules by cleaving their 5'-ends. The polypeptide is Ribonuclease P protein component 3 (Natronomonas pharaonis (strain ATCC 35678 / DSM 2160 / CIP 103997 / JCM 8858 / NBRC 14720 / NCIMB 2260 / Gabara) (Halobacterium pharaonis)).